The chain runs to 109 residues: Ribonuclease P protein component (109 aa).

Belongs to the RnpA family. In terms of assembly, consists of a catalytic RNA component (M1 or rnpB) and a protein subunit.

It catalyses the reaction Endonucleolytic cleavage of RNA, removing 5'-extranucleotides from tRNA precursor.. RNaseP catalyzes the removal of the 5'-leader sequence from pre-tRNA to produce the mature 5'-terminus. It can also cleave other RNA substrates such as 4.5S RNA. The protein component plays an auxiliary but essential role in vivo by binding to the 5'-leader sequence and broadening the substrate specificity of the ribozyme. This chain is Ribonuclease P protein component, found in Streptococcus agalactiae serotype III (strain NEM316).